The sequence spans 78 residues: Large ribosomal subunit protein uL30 (78 aa).

Acidic residues predominate over residues 58–68 (DDTSPDAETGA). The tract at residues 58-78 (DDTSPDAETGADLERDGGNRS) is disordered. Basic and acidic residues predominate over residues 69 to 78 (DLERDGGNRS).

It belongs to the universal ribosomal protein uL30 family. As to quaternary structure, part of the 50S ribosomal subunit.

The chain is Large ribosomal subunit protein uL30 from Roseiflexus sp. (strain RS-1).